A 205-amino-acid chain; its full sequence is Regulator of G-protein signaling 4 (205 aa).

Residues Cys-2, Cys-12, and Cys-95 are each lipidated (S-palmitoyl cysteine). The RGS domain occupies 62–178; that stretch reads SLENLINHEC…LKSRFYLDLT (117 aa).

In terms of processing, either Cys-2 or Cys-12 or both are palmitoylated. Phosphorylated by cyclic GMP-dependent protein kinase.

Its function is as follows. Inhibits signal transduction by increasing the GTPase activity of G protein alpha subunits thereby driving them into their inactive GDP-bound form. Activity on G(z)-alpha is inhibited by phosphorylation of the G-protein. Activity on G(z)-alpha and G(i)-alpha-1 is inhibited by palmitoylation of the G-protein. The chain is Regulator of G-protein signaling 4 (Rgs4) from Rattus norvegicus (Rat).